Consider the following 200-residue polypeptide: NAD(P)H-dependent FMN reductase C4B3.06c (200 aa).

FMN is bound by residues Arg-22, 96 to 99 (QYNG), and Tyr-126.

As to quaternary structure, homodimer.

Its subcellular location is the cytoplasm. It localises to the nucleus. It catalyses the reaction FMNH2 + NADP(+) = FMN + NADPH + 2 H(+). The enzyme catalyses FMNH2 + NAD(+) = FMN + NADH + 2 H(+). In terms of biological role, has several reductase activities that are NAD(P)H-dependent and involve FMN as a cofactor. May be involved in ferric iron assimilation. The polypeptide is NAD(P)H-dependent FMN reductase C4B3.06c (Schizosaccharomyces pombe (strain 972 / ATCC 24843) (Fission yeast)).